Consider the following 83-residue polypeptide: MNLTCMMIVAVLFLTAWTFVMADDSNNGLANLFSKSRYEMEDPEPSKLEKRKTCQRRWDFCPGALVGVITCCGGLICLGVMCI.

The signal sequence occupies residues 1–22 (MNLTCMMIVAVLFLTAWTFVMA). Residues 23 to 50 (DDSNNGLANLFSKSRYEMEDPEPSKLEK) constitute a propeptide that is removed on maturation. 3 disulfides stabilise this stretch: Cys-54-Cys-72, Cys-61-Cys-77, and Cys-71-Cys-82.

The protein belongs to the conotoxin O1 superfamily. As to expression, expressed by the venom duct.

The protein localises to the secreted. In terms of biological role, mu-conotoxins block voltage-gated sodium channels (Nav). The chain is Mu-conotoxin-like PnMKLT1-014 from Conus pennaceus (Feathered cone).